The chain runs to 377 residues: Mannan endo-1,4-beta-mannosidase A (377 aa).

Residues 1–18 (MKLSHMLLSLASLGVATA) form the signal peptide. Residue Trp-84 coordinates substrate. Asn-105 carries an N-linked (GlcNAc...) asparagine glycan. Asn-197 is a binding site for substrate. Glu-198 acts as the Proton donor in catalysis. N-linked (GlcNAc...) asparagine glycosylation is present at Asn-255. Tyr-273 provides a ligand contact to substrate. Residue Glu-306 is the Nucleophile of the active site. Residue Asn-326 is glycosylated (N-linked (GlcNAc...) asparagine). Trp-336 contacts substrate. Asn-357 is a glycosylation site (N-linked (GlcNAc...) asparagine).

It belongs to the glycosyl hydrolase 5 (cellulase A) family.

It is found in the secreted. The catalysed reaction is Random hydrolysis of (1-&gt;4)-beta-D-mannosidic linkages in mannans, galactomannans and glucomannans.. In terms of biological role, endo-1,4-mannanase, a crucial enzyme for depolymerization of seed galactomannans and wood galactoglucomannans. The sequence is that of Mannan endo-1,4-beta-mannosidase A (manA) from Aspergillus aculeatus.